Here is a 492-residue protein sequence, read N- to C-terminus: Ketol-acid reductoisomerase (NADP(+)) (492 aa).

In terms of domain architecture, KARI N-terminal Rossmann spans 14 to 208; it reads LDQLGKCRFM…GGHRAGVLQS (195 aa). NADP(+)-binding positions include 45-48, Arg-68, Arg-76, Ser-78, and 108-110; these read CGAQ and DKQ. His-132 is a catalytic residue. Residue Gly-158 coordinates NADP(+). 2 KARI C-terminal knotted domains span residues 209–344 and 345–485; these read SFVA…NAPQ and FDGK…MKDM. Residues Asp-217, Glu-221, Glu-389, and Glu-393 each coordinate Mg(2+). Ser-414 provides a ligand contact to substrate.

Belongs to the ketol-acid reductoisomerase family. Requires Mg(2+) as cofactor.

The enzyme catalyses (2R)-2,3-dihydroxy-3-methylbutanoate + NADP(+) = (2S)-2-acetolactate + NADPH + H(+). The catalysed reaction is (2R,3R)-2,3-dihydroxy-3-methylpentanoate + NADP(+) = (S)-2-ethyl-2-hydroxy-3-oxobutanoate + NADPH + H(+). It functions in the pathway amino-acid biosynthesis; L-isoleucine biosynthesis; L-isoleucine from 2-oxobutanoate: step 2/4. It participates in amino-acid biosynthesis; L-valine biosynthesis; L-valine from pyruvate: step 2/4. Functionally, involved in the biosynthesis of branched-chain amino acids (BCAA). Catalyzes an alkyl-migration followed by a ketol-acid reduction of (S)-2-acetolactate (S2AL) to yield (R)-2,3-dihydroxy-isovalerate. In the isomerase reaction, S2AL is rearranged via a Mg-dependent methyl migration to produce 3-hydroxy-3-methyl-2-ketobutyrate (HMKB). In the reductase reaction, this 2-ketoacid undergoes a metal-dependent reduction by NADPH to yield (R)-2,3-dihydroxy-isovalerate. This is Ketol-acid reductoisomerase (NADP(+)) from Pectobacterium carotovorum subsp. carotovorum (strain PC1).